Here is a 706-residue protein sequence, read N- to C-terminus: B-cell lymphoma 6 protein (706 aa).

The BTB domain maps to 32–99 (TDVVIVVSRE…MYTSRLNLRE (68 aa)). The interval 317–349 (EPPNAPLNRKGLVSPQSPQKSDCQPNSPTESCS) is disordered. Residues 330–349 (SPQSPQKSDCQPNSPTESCS) show a composition bias toward polar residues. Phosphoserine; by MAPK1 is present on residues serine 333 and serine 343. The residue at position 361 (serine 361) is a Phosphoserine. The tract at residues 376 to 379 (KKYK) is required for interaction with NuRD complex and for transcriptional repressor activity. At lysine 379 the chain carries N6-acetyllysine. Serine 404 carries the phosphoserine modification. Residues 407 to 467 (AYTAPPACQP…PRSSSESHSP (61 aa)) form a disordered region. Positions 424–456 (DLQSPTKLSASGEDSTIPQASRLNNIVNRSMTG) are enriched in polar residues. Low complexity predominate over residues 457–466 (SPRSSSESHS). 6 consecutive C2H2-type zinc fingers follow at residues 518–541 (FFCN…LQTH), 546–568 (YKCD…KTVH), 574–596 (YRCN…TRIH), 602–624 (YKCE…VLIH), 630–652 (YPCE…LRIH), and 658–681 (YHCE…RQKH).

As to quaternary structure, homodimer. Interacts (via BTB domain) with the corepressors BCOR, NCOR1 and SMRT/NCOR2; the interactions are direct. Forms preferably ternary complexes with BCOR and SMRT/NCOR2 on target gene promoters but, on enhancer elements, interacts with SMRT/NCOR2 and HDAC3 to repress proximal gene expression. Interacts with histone deacetylases HDAC2, HDAC5 and HDAC9 (via the catalytic domain). Interacts with ZBTB7 and BCL6B. Interacts with SCF(FBXO11) complex; the interaction is independent of phosphorylation and promotes ubiquitination. Interacts (when phosphorylated) with PIN1; the interaction is required for BCL6 degradation upon genotoxic stress. Interacts with ZBTB17; inhibits ZBTB17 transcriptional activity. Interacts with CTBP1, autoinhibits its transcriptional expression. Interacts with NOTCH1 NCID and SIRT1; leads to a epigenetic repression of selective NOTCH1-target genes. Interacts (nor via BTB domain neither acetylated) with the NuRD complex components CHD4, HDAC1, MBD3 and MTA3; the interaction with MTA3 inhibits BCL6 acetylation and is required for BCL6 transpriptional repression. In terms of processing, phosphorylated by MAPK1 in response to antigen receptor activation at Ser-333 and Ser-343. Phosphorylated by ATM in response to genotoxic stress. Phosphorylation induces its degradation by ubiquitin/proteasome pathway. Post-translationally, polyubiquitinated. Polyubiquitinated by SCF(FBXO11), leading to its degradation by the proteasome. Ubiquitinated by the SCF(FBXL17) complex, leading to its degradation by the proteasome: ubiquitination by the SCF(FBXL17) complex takes place when aberrant BTB domain dimers are formed. Acetylated at Lys-379 by EP300 which inhibits the interaction with NuRD complex and the transcriptional repressor function. Deacetylated by HDAC- and SIR2-dependent pathways. In terms of tissue distribution, expressed in germinal center T- and B-cells and in primary immature dendritic cells.

It is found in the nucleus. Transcriptional repressor mainly required for germinal center (GC) formation and antibody affinity maturation which has different mechanisms of action specific to the lineage and biological functions. Forms complexes with different corepressors and histone deacetylases to repress the transcriptional expression of different subsets of target genes. Represses its target genes by binding directly to the DNA sequence 5'-TTCCTAGAA-3' (BCL6-binding site) or indirectly by repressing the transcriptional activity of transcription factors. In GC B-cells, represses genes that function in differentiation, inflammation, apoptosis and cell cycle control, also autoregulates its transcriptional expression and up-regulates, indirectly, the expression of some genes important for GC reactions, such as AICDA, through the repression of microRNAs expression, like miR155. An important function is to allow GC B-cells to proliferate very rapidly in response to T-cell dependent antigens and tolerate the physiological DNA breaks required for immunglobulin class switch recombination and somatic hypermutation without inducing a p53/TP53-dependent apoptotic response. In follicular helper CD4(+) T-cells (T(FH) cells), promotes the expression of T(FH)-related genes but inhibits the differentiation of T(H)1, T(H)2 and T(H)17 cells. Also required for the establishment and maintenance of immunological memory for both T- and B-cells. Suppresses macrophage proliferation through competition with STAT5 for STAT-binding motifs binding on certain target genes, such as CCL2 and CCND2. In response to genotoxic stress, controls cell cycle arrest in GC B-cells in both p53/TP53-dependedent and -independent manners. Besides, also controls neurogenesis through the alteration of the composition of NOTCH-dependent transcriptional complexes at selective NOTCH targets, such as HES5, including the recruitment of the deacetylase SIRT1 and resulting in an epigenetic silencing leading to neuronal differentiation. The protein is B-cell lymphoma 6 protein (BCL6) of Homo sapiens (Human).